The sequence spans 730 residues: Neuroligin-like protein glit-1 (730 aa).

Positions 1-18 are cleaved as a signal peptide; that stretch reads MFTGTIFNSLFTLPLVIS. The Extracellular portion of the chain corresponds to 19 to 663; it reads QFVPPPTRPV…EIMVFKWITG (645 aa). Residues N103, N320, N445, N512, N557, N564, and N604 are each glycosylated (N-linked (GlcNAc...) asparagine). Residues 664–684 traverse the membrane as a helical segment; sequence VNVIIIALLIVLAGAFGYMVW. The Cytoplasmic portion of the chain corresponds to 685–730; it reads GNKEDEEAAYKAENHQLVEYRDTGHSVSDATISSRTRSPRSRITNL.

The protein belongs to the type-B carboxylesterase/lipase family. As to expression, expressed in the pharynx, intestine, and in several cells in the head including dopaminergic neurons.

It is found in the cell membrane. Functionally, probable neuronal cell surface protein thought to be involved in cell-cell-interactions. Confers protection against oxidative stress. Plays a role in protecting dopaminergic neurons against oxidative stress-induced neurodegeneration. This Caenorhabditis elegans protein is Neuroligin-like protein glit-1.